The following is a 61-amino-acid chain: Double gene block protein 1 (61 aa).

A disordered region spans residues Leu-15–Asn-45. The segment at Gly-17–Lys-35 is RNA-binding. Basic and acidic residues predominate over residues Val-28–Ala-37.

It belongs to the carmovirus double gene block protein 1 family. In terms of assembly, homodimer.

Its function is as follows. Cell-to-cell movement. Displays RNA-binding activity. This Carnation mottle virus (isolate China/Shanghai) (CarMV) protein is Double gene block protein 1.